The primary structure comprises 187 residues: UPF0301 protein Pcryo_0062 (187 aa).

Belongs to the UPF0301 (AlgH) family.

The chain is UPF0301 protein Pcryo_0062 from Psychrobacter cryohalolentis (strain ATCC BAA-1226 / DSM 17306 / VKM B-2378 / K5).